Reading from the N-terminus, the 315-residue chain is Salivary protein SG34 (315 aa).

The N-terminal stretch at 1–20 (MPVSYDFVILLALFIVLARS) is a signal peptide. Residues 98-161 (NAEVELLRES…QEEIEQQTKQ (64 aa)) are a coiled coil.

Its function is as follows. (Microbial infection) Modulates replication of duck Tembusu virus in salivary glands and virus release into the saliva, probably via the regulation of antimicrobial peptides expression in response to duck Tembusu virus infection. This chain is Salivary protein SG34, found in Aedes albopictus (Asian tiger mosquito).